The following is a 238-amino-acid chain: Urease accessory protein UreF (238 aa).

This sequence belongs to the UreF family. In terms of assembly, ureD, UreF and UreG form a complex that acts as a GTP-hydrolysis-dependent molecular chaperone, activating the urease apoprotein by helping to assemble the nickel containing metallocenter of UreC. The UreE protein probably delivers the nickel.

It localises to the cytoplasm. Its function is as follows. Required for maturation of urease via the functional incorporation of the urease nickel metallocenter. The chain is Urease accessory protein UreF from Rhodopseudomonas palustris (strain BisA53).